A 187-amino-acid chain; its full sequence is Threonylcarbamoyl-AMP synthase (187 aa).

One can recognise a YrdC-like domain in the interval 4–187; sequence TLTLSEAVTA…DARSGHILRL (184 aa).

It belongs to the SUA5 family. TsaC subfamily.

It localises to the cytoplasm. The enzyme catalyses L-threonine + hydrogencarbonate + ATP = L-threonylcarbamoyladenylate + diphosphate + H2O. Its function is as follows. Required for the formation of a threonylcarbamoyl group on adenosine at position 37 (t(6)A37) in tRNAs that read codons beginning with adenine. Catalyzes the conversion of L-threonine, HCO(3)(-)/CO(2) and ATP to give threonylcarbamoyl-AMP (TC-AMP) as the acyladenylate intermediate, with the release of diphosphate. This Xylella fastidiosa (strain 9a5c) protein is Threonylcarbamoyl-AMP synthase.